The primary structure comprises 540 residues: Isocitrate lyase (540 aa).

A substrate-binding site is contributed by S103–W105. D187 contributes to the Mg(2+) binding site. The Proton acceptor role is filled by C225. Residues G226–H227, N385–S389, and T458 contribute to the substrate site.

This sequence belongs to the isocitrate lyase/PEP mutase superfamily. Isocitrate lyase family. In terms of assembly, homotetramer. Mg(2+) is required as a cofactor.

It catalyses the reaction D-threo-isocitrate = glyoxylate + succinate. It participates in carbohydrate metabolism; glyoxylate cycle; (S)-malate from isocitrate: step 1/2. It functions in the pathway one-carbon metabolism; formaldehyde assimilation via serine pathway. With respect to regulation, in the presence of magnesium, inhibited by oxalate, potassium cyanide, manganese, silver, cadmium and to a lesser extent by succinate, glycolate, iodoacetamide, DL-penicillamine, aluminum, sodium, potassium, lithium and strontium. In terms of biological role, involved in the metabolic adaptation in response to environmental changes. Catalyzes the reversible formation of succinate and glyoxylate from isocitrate, a key step of the glyoxylate cycle, which operates as an anaplerotic route for replenishing the tricarboxylic acid cycle during growth on fatty acid substrates. May be involved in the assimilation of one-carbon compounds via the isocitrate lyase-positive serine pathway. This chain is Isocitrate lyase, found in Hyphomicrobium methylovorum.